Reading from the N-terminus, the 229-residue chain is ATP synthase subunit a (229 aa).

The next 6 membrane-spanning stretches (helical) occupy residues 25-45 (ADAV…SIAA), 82-102 (FFPL…IGLV), 104-124 (GFFP…VVFV), 142-162 (FLGP…IGHL), 181-201 (LVLI…MMLM), and 202-222 (GVLV…IYIQ).

The protein belongs to the ATPase A chain family. As to quaternary structure, F-type ATPases have 2 components, CF(1) - the catalytic core - and CF(0) - the membrane proton channel. CF(1) has five subunits: alpha(3), beta(3), gamma(1), delta(1), epsilon(1). CF(0) has three main subunits: a(1), b(2) and c(9-12). The alpha and beta chains form an alternating ring which encloses part of the gamma chain. CF(1) is attached to CF(0) by a central stalk formed by the gamma and epsilon chains, while a peripheral stalk is formed by the delta and b chains.

The protein localises to the cell inner membrane. Functionally, key component of the proton channel; it plays a direct role in the translocation of protons across the membrane. This chain is ATP synthase subunit a, found in Citrifermentans bemidjiense (strain ATCC BAA-1014 / DSM 16622 / JCM 12645 / Bem) (Geobacter bemidjiensis).